The following is a 120-amino-acid chain: Histone H3-like centromeric protein cnp1 (120 aa).

Positions Met-1–Thr-26 are disordered. Positions Ile-14 to Ala-120 are H3-like.

The protein belongs to the histone H3 family. As to quaternary structure, component of centromeric nucleosomes, where DNA is wrapped around a histone octamer core. The octamer contains two molecules each of H2A, H2B, cnp1/CENPA and H4 assembled in one cnp1-H4 heterotetramer and two H2A-H2B heterodimers. Interacts with the inner kinetochore. Component of centromeric nucleosomes. Interacts with mis6. Interacts with sim4. Ubiquitinated. Is degraded through ubiquitin-mediated proteolysis when not protected by its association to the kinetochore.

The protein localises to the nucleus. Its subcellular location is the chromosome. The protein resides in the centromere. In terms of biological role, histone H3-like nucleosomal protein that is specifically found in centromeric nucleosomes. Replaces conventional H3 in the nucleosome core of centromeric chromatin that serves as an assembly site for the inner kinetochore. Required for recruitment and assembly of kinetochore proteins, mitotic progression and chromosome segregation. May serve as an epigenetic mark that propagates centromere identity through replication and cell division. This chain is Histone H3-like centromeric protein cnp1 (cnp1), found in Schizosaccharomyces pombe (strain 972 / ATCC 24843) (Fission yeast).